The following is a 152-amino-acid chain: Methylglyoxal synthase (152 aa).

Residues 1 to 152 (MELTTRTIAA…YDRYLQQRLK (152 aa)) form the MGS-like domain. Substrate is bound by residues His19, Lys23, 45–48 (TGTT), and 65–66 (SG). Residue Asp71 is the Proton donor/acceptor of the active site. His98 provides a ligand contact to substrate.

It belongs to the methylglyoxal synthase family.

The catalysed reaction is dihydroxyacetone phosphate = methylglyoxal + phosphate. Functionally, catalyzes the formation of methylglyoxal from dihydroxyacetone phosphate. In Yersinia enterocolitica serotype O:8 / biotype 1B (strain NCTC 13174 / 8081), this protein is Methylglyoxal synthase.